A 558-amino-acid polypeptide reads, in one-letter code: Pentatricopeptide repeat-containing protein At1g06140, mitochondrial (558 aa).

A mitochondrion-targeting transit peptide spans 1–79; that stretch reads MLPVNRARAL…RNRHSWNTIL (79 aa). 13 PPR repeats span residues 38–68, 71–103, 108–142, 143–173, 174–208, 209–243, 245–275, 276–310, 311–345, 346–376, 377–411, 412–447, and 448–482; these read EVVLGSSLTNAYIQSNRLDFATSSFNRIPCW, NRHSWNTILSGYSKSKTCCYSDVLLLYNRMRRH, DSFNLVFAIKACVGLGLLENGILIHGLAMKNGLDK, DDYVAPSLVEMYAQLGTMESAQKVFDEIPVR, NSVLWGVLMKGYLKYSKDPEVFRLFCLMRDTGLAL, DALTLICLVKACGNVFAGKVGKCVHGVSIRRSFID, SDYLQASIIDMYVKCRLLDNARKLFETSVDR, NVVMWTTLISGFAKCERAVEAFDLFRQMLRESILP, NQCTLAAILVSCSSLGSLRHGKSVHGYMIRNGIEM, DAVNFTSFIDMYARCGNIQMARTVFDMMPER, NVISWSSMINAFGINGLFEEALDCFHKMKSQNVVP, NSVTFVSLLSACSHSGNVKEGWKQFESMTRDYGVVP, and EEEHYACMVDLLGRAGEIGEAKSFIDNMPVKPMAS. Residues 483 to 558 are type E motif; sequence AWGALLSACR…HVGQSATEVG (76 aa).

Belongs to the PPR family. PCMP-E subfamily.

It is found in the mitochondrion. This Arabidopsis thaliana (Mouse-ear cress) protein is Pentatricopeptide repeat-containing protein At1g06140, mitochondrial (PCMP-E61).